A 481-amino-acid polypeptide reads, in one-letter code: Cobyric acid synthase (481 aa).

The GATase cobBQ-type domain maps to 248–435 (ALTVAWLAFS…LHGMFGADGF (188 aa)). Residue Cys330 is the Nucleophile of the active site. Residue His427 is part of the active site.

Belongs to the CobB/CobQ family. CobQ subfamily.

The protein operates within cofactor biosynthesis; adenosylcobalamin biosynthesis. Functionally, catalyzes amidations at positions B, D, E, and G on adenosylcobyrinic A,C-diamide. NH(2) groups are provided by glutamine, and one molecule of ATP is hydrogenolyzed for each amidation. This is Cobyric acid synthase from Cereibacter sphaeroides (strain ATCC 17023 / DSM 158 / JCM 6121 / CCUG 31486 / LMG 2827 / NBRC 12203 / NCIMB 8253 / ATH 2.4.1.) (Rhodobacter sphaeroides).